Consider the following 198-residue polypeptide: Recombination protein RecR (198 aa).

The segment at Cys-57 to Cys-72 adopts a C4-type zinc-finger fold. In terms of domain architecture, Toprim spans Ser-80–Ala-175.

Belongs to the RecR family.

In terms of biological role, may play a role in DNA repair. It seems to be involved in an RecBC-independent recombinational process of DNA repair. It may act with RecF and RecO. The polypeptide is Recombination protein RecR (Streptococcus uberis (strain ATCC BAA-854 / 0140J)).